The sequence spans 1048 residues: Platelet-derived growth factor receptor beta (1048 aa).

An N-terminal signal peptide occupies residues 1–30 (MLRASAMRAAVLHLTVALAALLSSCTTVSC). At 31–528 (LKIVPEEKQL…LVSSSLFSQV (498 aa)) the chain is on the extracellular side. The 90-residue stretch at 35–124 (PEEKQLILAE…EIKEVAVFVP (90 aa)) folds into the Ig-like C2-type 1 domain. 2 disulfides stabilise this stretch: cysteine 52-cysteine 108 and cysteine 153-cysteine 194. 4 N-linked (GlcNAc...) asparagine glycosylation sites follow: asparagine 87, asparagine 159, asparagine 224, and asparagine 239. Ig-like C2-type domains lie at 216-309 (PEDI…ASVN) and 319-406 (AVKS…KEVT). Cysteines 240 and 293 form a disulfide. N-linked (GlcNAc...) asparagine glycosylation is found at asparagine 309, asparagine 327, and asparagine 457. Cysteine 434 and cysteine 503 are disulfide-bonded. The chain crosses the membrane as a helical span at residues 529-549 (VLLAVVLTLVPIIIMSIIILI). Topologically, residues 550–1048 (AVWKKKPRYE…PIPDPKPEKS (499 aa)) are cytoplasmic. Tyrosine 558, tyrosine 575, and tyrosine 577 each carry phosphotyrosine; by autocatalysis. The region spanning 596–957 (LVLGRTLGSG…FLVHCVGDML (362 aa)) is the Protein kinase domain. ATP is bound by residues 602-610 (LGSGAFGRV) and lysine 630. Phosphotyrosine; by autocatalysis is present on residues tyrosine 735, tyrosine 746, tyrosine 758, tyrosine 766, and tyrosine 770. The active-site Proton acceptor is aspartate 821. Phosphotyrosine; by autocatalysis occurs at positions 852 and 1036.

It belongs to the protein kinase superfamily. Tyr protein kinase family. CSF-1/PDGF receptor subfamily. Interacts with homodimeric PDGFB and PDGFD, and with heterodimers formed by PDGFA and PDGFB. Monomer in the absence of bound ligand. Interaction with homodimeric PDGFB, heterodimers formed by PDGFA and PDGFB or homodimeric PDGFD, leads to receptor dimerization, where both PDGFRA homodimers and heterodimers with PDGFRB are observed. In terms of processing, ubiquitinated. After autophosphorylation, the receptor is polyubiquitinated, leading to its degradation. Autophosphorylated on tyrosine residues upon ligand binding. Autophosphorylation occurs in trans, i.e. one subunit of the dimeric receptor phosphorylates tyrosine residues on the other subunit.

The protein localises to the cell membrane. Its subcellular location is the cytoplasmic vesicle. It localises to the lysosome lumen. The enzyme catalyses L-tyrosyl-[protein] + ATP = O-phospho-L-tyrosyl-[protein] + ADP + H(+). Present in an inactive conformation in the absence of bound ligand. Binding of PDGFB and/or PDGFD leads to dimerization and activation by autophosphorylation on tyrosine residues. In terms of biological role, tyrosine-protein kinase that acts as a cell-surface receptor for homodimeric PDGFB and PDGFD and for heterodimers formed by PDGFA and PDGFB, and plays an essential role in the regulation of embryonic development, cell proliferation, survival, differentiation, chemotaxis and migration. Plays an essential role in blood vessel development by promoting proliferation, migration and recruitment of pericytes and smooth muscle cells to endothelial cells. Required for normal development of the cardiovascular system. Required for normal recruitment of pericytes (mesangial cells) in the kidney glomerulus, and for normal formation of a branched network of capillaries in kidney glomeruli. Promotes rearrangement of the actin cytoskeleton and the formation of membrane ruffles. Binding of its cognate ligands - homodimeric PDGFB, heterodimers formed by PDGFA and PDGFB or homodimeric PDGFD -leads to the activation of several signaling cascades; the response depends on the nature of the bound ligand and is modulated by the formation of heterodimers between PDGFRA and PDGFRB. Receptor signaling is down-regulated by protein phosphatases that dephosphorylate the receptor and its down-stream effectors, and by rapid internalization of the activated receptor. The polypeptide is Platelet-derived growth factor receptor beta (pdgfrb) (Takifugu rubripes (Japanese pufferfish)).